A 149-amino-acid polypeptide reads, in one-letter code: Calmodulin (149 aa).

Residue Ala-2 is modified to N-acetylalanine. EF-hand domains lie at 8–43, 44–79, 81–116, and 117–149; these read EQIA…LGQN, PTEA…KMKD, DTEE…LGEK, and LTDE…MMAK. Residues Asp-21, Asp-23, Asp-25, Thr-27, Glu-32, Asp-57, Asp-59, Asn-61, Thr-63, Glu-68, Asp-94, Asp-96, Asn-98, and Glu-105 each contribute to the Ca(2+) site. N6,N6,N6-trimethyllysine is present on Lys-116. Ca(2+) is bound by residues Asp-130, Asp-132, Asp-134, Gln-136, and Glu-141.

This sequence belongs to the calmodulin family.

Calmodulin mediates the control of a large number of enzymes, ion channels and other proteins by Ca(2+). Among the enzymes to be stimulated by the calmodulin-Ca(2+) complex are a number of protein kinases and phosphatases. In Heterocapsa triquetra (Dinoflagellate), this protein is Calmodulin.